The sequence spans 136 residues: Aspartate 1-decarboxylase (136 aa).

The active-site Schiff-base intermediate with substrate; via pyruvic acid is Ser-25. Pyruvic acid (Ser) is present on Ser-25. Thr-57 lines the substrate pocket. Tyr-58 functions as the Proton donor in the catalytic mechanism. Residue 73–75 (GAA) coordinates substrate. Residues 117-136 (IFQLGEETTPEEAPSLEQRN) are disordered.

It belongs to the PanD family. Heterooctamer of four alpha and four beta subunits. Pyruvate serves as cofactor. In terms of processing, is synthesized initially as an inactive proenzyme, which is activated by self-cleavage at a specific serine bond to produce a beta-subunit with a hydroxyl group at its C-terminus and an alpha-subunit with a pyruvoyl group at its N-terminus.

Its subcellular location is the cytoplasm. The enzyme catalyses L-aspartate + H(+) = beta-alanine + CO2. Its pathway is cofactor biosynthesis; (R)-pantothenate biosynthesis; beta-alanine from L-aspartate: step 1/1. Functionally, catalyzes the pyruvoyl-dependent decarboxylation of aspartate to produce beta-alanine. In Chloroherpeton thalassium (strain ATCC 35110 / GB-78), this protein is Aspartate 1-decarboxylase.